The primary structure comprises 414 residues: F-box protein At3g26010 (414 aa).

The 48-residue stretch at Asn5–Ser52 folds into the F-box domain.

This Arabidopsis thaliana (Mouse-ear cress) protein is F-box protein At3g26010.